Consider the following 365-residue polypeptide: PHD finger protein 6 (365 aa).

At S2 the chain carries N-acetylserine. 2 short sequence motifs (nuclear localization signal) span residues 13–16 (RQRK) and 129–133 (RKHKK). The segment at 14–52 (QRKCGFCKSNRDKECGQLLISENQKVAAHHKCMLFSSAL) adopts a C2HC pre-PHD-type 1 zinc-finger fold. The tract at residues 14-132 (QRKCGFCKSN…IYMVYCRKHK (119 aa)) is extended PHD1 domain (ePHD1). The segment at 80–132 (LMCSLCHCPGATIGCDVKTCHRTYHYHCALHDKAQIREKPSQGIYMVYCRKHK) adopts a PHD-type 1 zinc-finger fold. 3 positions are modified to phosphoserine: S138, S145, and S155. The segment at 139-211 (EADLEESFNE…RSSPSDTRPK (73 aa)) is disordered. The Nucleolar localization signal signature appears at 157–169 (KSKKKSRKGRPRK). A compositionally biased stretch (basic residues) spans 157-171 (KSKKKSRKGRPRKTN). K173 participates in a covalent cross-link: Glycyl lysine isopeptide (Lys-Gly) (interchain with G-Cter in SUMO2). Phosphoserine is present on residues S183 and S199. The C2HC pre-PHD-type 2 zinc-finger motif lies at 209–249 (RPKCGFCHVGEEENEARGKLHIFNAKKAAAHYKCMLFSSGT). The tract at residues 209 to 330 (RPKCGFCHVG…IYKLYCKNHS (122 aa)) is extended PHD2 domain (ePHD2). A Glycyl lysine isopeptide (Lys-Gly) (interchain with G-Cter in SUMO2) cross-link involves residue K227. The segment at 278–330 (MKCTLCSQPGATIGCEIKACVKTYHYHCGVQDKAKYIENMSRGIYKLYCKNHS) adopts a PHD-type 2 zinc-finger fold. The segment at 330–365 (SGNDERDEEDEERESKSRGKVEIDQQQLTQQQLNGN) is disordered. A compositionally biased stretch (basic and acidic residues) spans 342-352 (RESKSRGKVEI). Positions 354–365 (QQQLTQQQLNGN) are enriched in low complexity. Position 358 is a phosphothreonine (T358).

In terms of assembly, interacts with UBTF. Interacts with the NuRD complex component RBBP4 (via the nucleolar localization motif), the interaction mediates transcriptional repression activity.

It is found in the nucleus. It localises to the nucleolus. Its subcellular location is the chromosome. The protein localises to the centromere. The protein resides in the kinetochore. Transcriptional regulator that associates with ribosomal RNA promoters and suppresses ribosomal RNA (rRNA) transcription. This is PHD finger protein 6 (PHF6) from Pongo abelii (Sumatran orangutan).